The sequence spans 184 residues: ATP-dependent protease subunit HslV (184 aa).

Residue T12 is part of the active site. Residues A166, C169, and T172 each coordinate Na(+).

The protein belongs to the peptidase T1B family. HslV subfamily. A double ring-shaped homohexamer of HslV is capped on each side by a ring-shaped HslU homohexamer. The assembly of the HslU/HslV complex is dependent on binding of ATP.

Its subcellular location is the cytoplasm. The enzyme catalyses ATP-dependent cleavage of peptide bonds with broad specificity.. Allosterically activated by HslU binding. Its function is as follows. Protease subunit of a proteasome-like degradation complex believed to be a general protein degrading machinery. The sequence is that of ATP-dependent protease subunit HslV from Brucella ovis (strain ATCC 25840 / 63/290 / NCTC 10512).